The chain runs to 393 residues: Acetylornithine aminotransferase (393 aa).

Residues Gly-95–Ala-96 and Phe-127 contribute to the pyridoxal 5'-phosphate site. Arg-130 is a N(2)-acetyl-L-ornithine binding site. A pyridoxal 5'-phosphate-binding site is contributed by Asp-214–Gln-217. Lys-243 is modified (N6-(pyridoxal phosphate)lysine). Ser-271 contributes to the N(2)-acetyl-L-ornithine binding site. Residue Thr-272 coordinates pyridoxal 5'-phosphate.

The protein belongs to the class-III pyridoxal-phosphate-dependent aminotransferase family. ArgD subfamily. Homodimer. It depends on pyridoxal 5'-phosphate as a cofactor.

Its subcellular location is the cytoplasm. The catalysed reaction is N(2)-acetyl-L-ornithine + 2-oxoglutarate = N-acetyl-L-glutamate 5-semialdehyde + L-glutamate. It functions in the pathway amino-acid biosynthesis; L-arginine biosynthesis; N(2)-acetyl-L-ornithine from L-glutamate: step 4/4. The sequence is that of Acetylornithine aminotransferase from Nitrosomonas europaea (strain ATCC 19718 / CIP 103999 / KCTC 2705 / NBRC 14298).